A 481-amino-acid chain; its full sequence is Cobyric acid synthase (481 aa).

In terms of domain architecture, GATase cobBQ-type spans 249 to 436; it reads GLHIVCLRLS…LHGMFRDDAF (188 aa). The active-site Nucleophile is the cysteine 331. Histidine 428 is an active-site residue.

It belongs to the CobB/CobQ family. CobQ subfamily.

Its pathway is cofactor biosynthesis; adenosylcobalamin biosynthesis. Catalyzes amidations at positions B, D, E, and G on adenosylcobyrinic A,C-diamide. NH(2) groups are provided by glutamine, and one molecule of ATP is hydrogenolyzed for each amidation. The polypeptide is Cobyric acid synthase (Jannaschia sp. (strain CCS1)).